Consider the following 379-residue polypeptide: Presenilin-associated rhomboid-like protein, mitochondrial (379 aa).

Residues 1 to 52 constitute a mitochondrion transit peptide; the sequence is MAWRGWAQRGWGCGQAWAASVGGRSCEELTAALTPPRLLGRRFNFFIQQKCG. At 53–101 the chain is on the mitochondrial matrix side; that stretch reads FRKAPRKVEPRRSDTGTSGEAYKRSALIPPVEETVFYPSPYPIRSLIKP. S65 carries the phosphoserine modification. Residue T69 is modified to Phosphothreonine. Position 70 is a phosphoserine (S70). The helical transmembrane segment at 102-121 threads the bilayer; it reads LFFTVGFTGCAFGSAAIWQY. Residues 122 to 167 lie on the Mitochondrial intermembrane side of the membrane; the sequence is ESLKSRVQSYFDGIKADWLDSIRPQKEGDFRKEINKWWNNLSDGQR. Residues 168–187 form a helical membrane-spanning segment; it reads TVTGIIAANVLVFCLWRVPS. The Mitochondrial matrix segment spans residues 188 to 207; sequence LQRTMIRYFTSNPASKVLCS. The chain crosses the membrane as a helical span at residues 208–230; the sequence is PMLLSTFSHFSLFHMAANMYVLW. Residues 231-244 lie on the Mitochondrial intermembrane side of the membrane; sequence SFSSSIVNILGQEQ. The chain crosses the membrane as a helical span at residues 245-262; it reads FMAVYLSAGVISNFVSYV. Residues 263–273 are Mitochondrial matrix-facing; the sequence is GKVATGRYGPS. The chain crosses the membrane as a helical span at residues 274–292; the sequence is LGASGAIMTVLAAVCTKIP. S277 acts as the Nucleophile in catalysis. The Mitochondrial intermembrane segment spans residues 293–295; that stretch reads EGR. Residues 296–318 traverse the membrane as a helical segment; sequence LAIIFLPMFTFTAGNALKAIIAM. Over 319–332 the chain is Mitochondrial matrix; it reads DTAGMILGWKFFDH. A helical membrane pass occupies residues 333 to 354; that stretch reads AAHLGGALFGIWYVTYGHELIW. Residue H335 is part of the active site. The Mitochondrial intermembrane portion of the chain corresponds to 355–379; sequence KNREPLVKIWHEIRTNGPKKGGGSK.

Belongs to the peptidase S54 family. As to quaternary structure, interacts with PSEN1 and PSEN2. Binds OPA1. P-beta is proteolytically processed (beta-cleavage) in a PARL-dependent manner.

It is found in the mitochondrion inner membrane. The protein resides in the nucleus. The enzyme catalyses Cleaves type-1 transmembrane domains using a catalytic dyad composed of serine and histidine that are contributed by different transmembrane domains.. Its function is as follows. Required for the control of apoptosis during postnatal growth. Essential for proteolytic processing of an antiapoptotic form of OPA1 which prevents the release of mitochondrial cytochrome c in response to intrinsic apoptotic signals. Required for the maturation of PINK1 into its 52kDa mature form after its cleavage by mitochondrial-processing peptidase (MPP). Promotes cleavage of serine/threonine-protein phosphatase PGAM5 in damaged mitochondria in response to loss of mitochondrial membrane potential. Mediates differential cleavage of PINK1 and PGAM5 depending on the health status of mitochondria, disassociating from PINK1 and associating with PGAM5 in response to mitochondrial membrane potential loss. Required for processing of CLPB into a form with higher protein disaggregase activity by removing an autoinhibitory N-terminal peptide. Promotes processing of DIABLO/SMAC in the mitochondrion which is required for DIABLO apoptotic activity. Also required for cleavage of STARD7 and TTC19. Promotes changes in mitochondria morphology regulated by phosphorylation of P-beta domain. This is Presenilin-associated rhomboid-like protein, mitochondrial (PARL) from Pongo abelii (Sumatran orangutan).